Here is a 131-residue protein sequence, read N- to C-terminus: Transcription antitermination protein NusB (131 aa).

It belongs to the NusB family.

Involved in transcription antitermination. Required for transcription of ribosomal RNA (rRNA) genes. Binds specifically to the boxA antiterminator sequence of the ribosomal RNA (rrn) operons. This Bacillus subtilis (strain 168) protein is Transcription antitermination protein NusB.